Reading from the N-terminus, the 358-residue chain is Carbamoyl phosphate synthase small chain (358 aa).

A CPSase region spans residues 1–172; it reads MKAALALEDG…EAKRFESDGD (172 aa). L-glutamine-binding residues include serine 45, glycine 222, and glycine 224. One can recognise a Glutamine amidotransferase type-1 domain in the interval 174-358; the sequence is EVVLVDCGVK…RYVDMLREYR (185 aa). Cysteine 249 acts as the Nucleophile in catalysis. 4 residues coordinate L-glutamine: leucine 250, glutamine 253, asparagine 291, and phenylalanine 294. Catalysis depends on residues histidine 333 and glutamate 335.

It belongs to the CarA family. As to quaternary structure, composed of two chains; the small (or glutamine) chain promotes the hydrolysis of glutamine to ammonia, which is used by the large (or ammonia) chain to synthesize carbamoyl phosphate. Tetramer of heterodimers (alpha,beta)4.

The catalysed reaction is hydrogencarbonate + L-glutamine + 2 ATP + H2O = carbamoyl phosphate + L-glutamate + 2 ADP + phosphate + 2 H(+). It catalyses the reaction L-glutamine + H2O = L-glutamate + NH4(+). Its pathway is amino-acid biosynthesis; L-arginine biosynthesis; carbamoyl phosphate from bicarbonate: step 1/1. The protein operates within pyrimidine metabolism; UMP biosynthesis via de novo pathway; (S)-dihydroorotate from bicarbonate: step 1/3. Small subunit of the glutamine-dependent carbamoyl phosphate synthetase (CPSase). CPSase catalyzes the formation of carbamoyl phosphate from the ammonia moiety of glutamine, carbonate, and phosphate donated by ATP, constituting the first step of 2 biosynthetic pathways, one leading to arginine and/or urea and the other to pyrimidine nucleotides. The small subunit (glutamine amidotransferase) binds and cleaves glutamine to supply the large subunit with the substrate ammonia. In Archaeoglobus fulgidus (strain ATCC 49558 / DSM 4304 / JCM 9628 / NBRC 100126 / VC-16), this protein is Carbamoyl phosphate synthase small chain.